The sequence spans 367 residues: tRNA-specific 2-thiouridylase MnmA (367 aa).

ATP is bound by residues 13–20 (GLSGGVDS) and methionine 39. The interval 99 to 101 (NPD) is interaction with target base in tRNA. Catalysis depends on cysteine 104, which acts as the Nucleophile. Cysteine 104 and cysteine 200 are disulfide-bonded. Glycine 128 serves as a coordination point for ATP. Residues 150 to 152 (KDQ) form an interaction with tRNA region. Cysteine 200 functions as the Cysteine persulfide intermediate in the catalytic mechanism. The segment at 307–308 (RY) is interaction with tRNA.

This sequence belongs to the MnmA/TRMU family.

The protein resides in the cytoplasm. The catalysed reaction is S-sulfanyl-L-cysteinyl-[protein] + uridine(34) in tRNA + AH2 + ATP = 2-thiouridine(34) in tRNA + L-cysteinyl-[protein] + A + AMP + diphosphate + H(+). Catalyzes the 2-thiolation of uridine at the wobble position (U34) of tRNA, leading to the formation of s(2)U34. This chain is tRNA-specific 2-thiouridylase MnmA, found in Neisseria meningitidis serogroup C / serotype 2a (strain ATCC 700532 / DSM 15464 / FAM18).